A 442-amino-acid polypeptide reads, in one-letter code: Probable serine/threonine-protein kinase kinase DDB_G0280643 (442 aa).

Positions 74–398 (IDPNTIVDCG…VNEILESPYF (325 aa)) constitute a Protein kinase domain. ATP-binding positions include 80–88 (VDCGTNGIM) and K103. Catalysis depends on D231, which acts as the Proton acceptor.

The protein belongs to the protein kinase superfamily. CMGC Ser/Thr protein kinase family. MAP kinase subfamily.

The enzyme catalyses L-seryl-[protein] + ATP = O-phospho-L-seryl-[protein] + ADP + H(+). It carries out the reaction L-threonyl-[protein] + ATP = O-phospho-L-threonyl-[protein] + ADP + H(+). In Dictyostelium discoideum (Social amoeba), this protein is Probable serine/threonine-protein kinase kinase DDB_G0280643.